We begin with the raw amino-acid sequence, 332 residues long: UPF0194 membrane protein YbhG (332 aa).

Residues 1–16 (MMKKPVVIGLAVVVLA) form the signal peptide. A coiled-coil region spans residues 108-209 (EEIAQAAAAV…LNLQDSTLIA (102 aa)).

Belongs to the UPF0194 family.

It localises to the periplasm. The chain is UPF0194 membrane protein YbhG from Escherichia coli (strain 55989 / EAEC).